Reading from the N-terminus, the 684-residue chain is MAIPTLEQKLTWLKPAPASSRELDLAAQIDPAQFEIGFQRTNDILDEGMDVFVRSCRCAMGVAGDSLVAIMTADGDIVNGSCGTYLHAVIPPLIIKYILETYGDEIRDGDLWFANDAVYGGVHNPDQMVCMPVYYEGKLVAWTAALVHTTETGAIEPGGMPVSATTRFEEGMNLPPMRIGENFKLREDVVSMFVAFGLRAPSMIAVDLKARCTTADRVRTRIIELCEREGADYVTGLFRKMLQVAEAGARELIEQWPDGKYRCVTFSDAVGLKQGLVRSCYMTLEKKGDRMLVDLSETGPETPSPYNAHPQAAIAHFSNYIYEYLFHSLPISNGTFANIDFKFGKNTCLSPDPRAATSCSVMISTGVMSAVHNACAKAMFSTSLWKQSGASMGNGGNALVLAGQNQWGSSFADMLAYSINTEGQGARPTEDGMDAFGFPWCVFGRAPNTESVENEFPLLVPLSNHWKDSCGHGKYRGGVGTAQVWVAHHVPELYMMAIADNTKLQTPQPLFGGYAPCTVPGIGIRNANIKELMAEGSDKIKLDVETLLAERTIDGKYEIEFQGRSVRPYSNGEVVTFAFSCGGTGYGDPLDRDPKSVEVDLLKGVLTEQTAQNIYKVKWDANLRRVDLDETSRLRAAEHDARRKRGVPYEQFEREWLKQRPDDEILKYYGTWPDAKVAQPLLRA.

Belongs to the oxoprolinase family. In terms of assembly, acetophenone carboxylase consists of five subunits; a heterooctameric subcomplex of two alpha (Apc1), two beta (Apc2), two gamma (Apc3) and two delta (Apc4) subunits assembles with the epsilon (Apc5) subunit in an unknown stoichiometry. Mg(2+) is required as a cofactor. Mn(2+) serves as cofactor.

The protein localises to the cytoplasm. The enzyme catalyses acetophenone + hydrogencarbonate + 2 ATP + H2O = 3-oxo-3-phenylpropanoate + 2 ADP + 2 phosphate + 2 H(+). Inhibited by zinc ions, carbamoylphosphate and beta,gamma-imido-ATP. In terms of biological role, catalyzes the carboxylation of acetophenone to form 3-oxo-3-phenylpropanoate (benzoylacetate) in the anaerobic catabolism of ethylbenzene. Also carboxylates propiophenone at the same rate and 4-acetyl-pyridine at lower rates. In Aromatoleum aromaticum (strain DSM 19018 / LMG 30748 / EbN1) (Azoarcus sp. (strain EbN1)), this protein is Acetophenone carboxylase delta subunit (apc4).